The chain runs to 1411 residues: DNA-directed RNA polymerase subunit beta' (1411 aa).

Zn(2+) is bound by residues Cys70, Cys72, Cys85, and Cys88. The Mg(2+) site is built by Asp458, Asp460, and Asp462. Cys813, Cys887, Cys894, and Cys897 together coordinate Zn(2+). The interval Ala1384 to Glu1411 is disordered.

This sequence belongs to the RNA polymerase beta' chain family. As to quaternary structure, the RNAP catalytic core consists of 2 alpha, 1 beta, 1 beta' and 1 omega subunit. When a sigma factor is associated with the core the holoenzyme is formed, which can initiate transcription. Mg(2+) serves as cofactor. Zn(2+) is required as a cofactor.

It carries out the reaction RNA(n) + a ribonucleoside 5'-triphosphate = RNA(n+1) + diphosphate. Its function is as follows. DNA-dependent RNA polymerase catalyzes the transcription of DNA into RNA using the four ribonucleoside triphosphates as substrates. The polypeptide is DNA-directed RNA polymerase subunit beta' (Paracidovorax citrulli (strain AAC00-1) (Acidovorax citrulli)).